The primary structure comprises 662 residues: Tubulin--tyrosine ligase-like protein 12 (662 aa).

Positions 324–660 constitute a TTL domain; it reads LKKRKIKVYA…LDEIDPTKVT (337 aa). ATP contacts are provided by residues 472–475, K491, and D493; that span reads CEYI.

This sequence belongs to the tubulin--tyrosine ligase family.

Functionally, regulates microtubule dynamics in uterine muscle cells. This is Tubulin--tyrosine ligase-like protein 12 from Caenorhabditis elegans.